The sequence spans 1104 residues: Extended synaptotagmin-1 (1104 aa).

M1 is modified (N-acetylmethionine). Over 1 to 38 (MERSPGEGPSPSPMDQPSAPSDPTDQPPAAHAKPDPGS) the chain is Cytoplasmic. The interval 1–48 (MERSPGEGPSPSPMDQPSAPSDPTDQPPAAHAKPDPGSGGQPAGPGAA) is disordered. The span at 37 to 47 (GSGGQPAGPGA) shows a compositional bias: gly residues. The chain crosses the membrane as a helical span at residues 39 to 59 (GGQPAGPGAAGEALAVLTSFG). The Lumenal segment spans residues 60–62 (RRL). Residues 63 to 83 (LVLIPVYLAGAVGLSVGFVLF) traverse the membrane as a helical segment. At 84-1104 (GLALYLGWRR…LMDNKDKGSS (1021 aa)) the chain is on the cytoplasmic side. A coiled-coil region spans residues 91–116 (WRRVRDEKERSLRAARQLLDDEEQLT). The SMP-LTD domain maps to 135–313 (DVEKAEWLNK…LPNRLLVPLV (179 aa)). 4 consecutive C2 domains span residues 312-433 (LVPD…DDWF), 460-580 (QVLQ…QLSS), 627-751 (SVDA…DEWL), and 777-899 (LEEV…TLSS). S324 bears the Phosphoserine; by CDK5 mark. Residues K344, D345, D357, D404, D406, D408, D410, and D411 each coordinate Ca(2+). Residues 617 to 641 (VDSENPQRGSSVDAPPRPCHTTPDS) form a disordered region. An N6-acetyllysine modification is found at K817. 2 positions are modified to phosphoserine: S820 and S941. The segment at 924 to 950 (SHSYSHSSSSLSEEPELSGGPPHITSS) is disordered. Over residues 925–946 (HSYSHSSSSLSEEPELSGGPPH) the composition is skewed to low complexity. T948 carries the post-translational modification Phosphothreonine. Residues S949 and S963 each carry the phosphoserine modification. The C2 5 domain maps to 971 to 1093 (PLGQVKLTLW…DLSQGVARWY (123 aa)). Y1009 carries the phosphotyrosine modification. The segment at 1018–1025 (KNRGTKRR) is required for phosphatidylinositol 4,5-bisphosphate-dependent location at the cell membrane. S1034 is subject to Phosphoserine.

This sequence belongs to the extended synaptotagmin family. In terms of assembly, interacts with ESYT2 and ESYT3. Interacts with ADGRD1; inhibiting the G-protein-coupled receptor activity of ADGRD1. Interaction with ADGRD1 is abolished when cytosolic calcium increases, relieving ADGRD1 G-protein-coupled receptor activity. Interacts (phosphorylated form) with SLC2A4. Post-translationally, phosphorylated on Ser residues in insulin-treated adipocytes (in vitro); this promotes interaction with SLC2A4. As to expression, widely expressed.

Its subcellular location is the endoplasmic reticulum membrane. The protein localises to the cell membrane. Its function is as follows. Binds calcium (via the C2 domains) and translocates to sites of contact between the endoplasmic reticulum and the cell membrane in response to increased cytosolic calcium levels. Helps tether the endoplasmic reticulum to the cell membrane and promotes the formation of appositions between the endoplasmic reticulum and the cell membrane. Acts as an inhibitor of ADGRD1 G-protein-coupled receptor activity in absence of cytosolic calcium. Binds glycerophospholipids in a barrel-like domain and may play a role in cellular lipid transport. The polypeptide is Extended synaptotagmin-1 (Homo sapiens (Human)).